We begin with the raw amino-acid sequence, 504 residues long: Histidine ammonia-lyase (504 aa).

The segment at residues Ala142–Gly144 is a cross-link (5-imidazolinone (Ala-Gly)). The residue at position 143 (Ser143) is a 2,3-didehydroalanine (Ser).

This sequence belongs to the PAL/histidase family. Contains an active site 4-methylidene-imidazol-5-one (MIO), which is formed autocatalytically by cyclization and dehydration of residues Ala-Ser-Gly.

It is found in the cytoplasm. The catalysed reaction is L-histidine = trans-urocanate + NH4(+). It participates in amino-acid degradation; L-histidine degradation into L-glutamate; N-formimidoyl-L-glutamate from L-histidine: step 1/3. This Staphylococcus aureus (strain JH1) protein is Histidine ammonia-lyase.